The sequence spans 327 residues: Phenylalanine--tRNA ligase alpha subunit (327 aa).

Glutamate 252 serves as a coordination point for Mg(2+).

This sequence belongs to the class-II aminoacyl-tRNA synthetase family. Phe-tRNA synthetase alpha subunit type 1 subfamily. As to quaternary structure, tetramer of two alpha and two beta subunits. The cofactor is Mg(2+).

Its subcellular location is the cytoplasm. It catalyses the reaction tRNA(Phe) + L-phenylalanine + ATP = L-phenylalanyl-tRNA(Phe) + AMP + diphosphate + H(+). The polypeptide is Phenylalanine--tRNA ligase alpha subunit (Shigella flexneri).